The primary structure comprises 331 residues: FMRFamide-related neuropeptides (331 aa).

An N-terminal signal peptide occupies residues methionine 1–alanine 25. Residues phenylalanine 26–serine 65 constitute a propeptide that is removed on maturation. 2 positions are modified to phenylalanine amide: phenylalanine 71 and phenylalanine 83. Residues asparagine 86 to aspartate 94 constitute a propeptide that is removed on maturation. Phenylalanine 100 carries the post-translational modification Phenylalanine amide. Positions alanine 103–valine 168 are excised as a propeptide. Positions glutamine 122–arginine 158 are disordered. A compositionally biased stretch (basic and acidic residues) spans proline 146–arginine 158. A phenylalanine amide mark is found at phenylalanine 174 and phenylalanine 181. Positions asparagine 184–glutamate 194 are excised as a propeptide. A Phenylalanine amide modification is found at phenylalanine 200. The propeptide occupies aspartate 203–glutamate 205. Phenylalanine amide is present on phenylalanine 211. The propeptide occupies serine 214 to aspartate 216. Position 222 is a phenylalanine amide (phenylalanine 222). Residues asparagine 225 to aspartate 236 constitute a propeptide that is removed on maturation. The residue at position 242 (phenylalanine 242) is a Phenylalanine amide. Residues glycine 245 to glutamate 254 constitute a propeptide that is removed on maturation. The residue at position 260 (phenylalanine 260) is a Phenylalanine amide. The propeptide occupies aspartate 263–glutamate 265. Phenylalanine 271 bears the Phenylalanine amide mark. Residues serine 274–aspartate 277 constitute a propeptide that is removed on maturation. Basic and acidic residues predominate over residues arginine 282–phenylalanine 296. Residues arginine 282–threonine 310 form a disordered region. Phenylalanine amide is present on phenylalanine 283. Positions asparagine 286 to aspartate 293 are excised as a propeptide. Phenylalanine 299 bears the Phenylalanine amide mark. The propeptide occupies glycine 302–aspartate 312. Phenylalanine amide is present on phenylalanine 318. Positions serine 321–glycine 331 are excised as a propeptide.

The protein belongs to the FARP (FMRFamide related peptide) family.

It is found in the secreted. Its function is as follows. Excitatory neurotransmitters that directly modulate chromatophore function by activating chromatophore expansion at the chromatophore neuromuscular junction. The sequence is that of FMRFamide-related neuropeptides from Doryteuthis pealeii (Longfin inshore squid).